We begin with the raw amino-acid sequence, 2034 residues long: Sperm vesicle fusion protein fer-1 (2034 aa).

The interval 1-80 (MTVKEKLLKV…GGSDIELLPD (80 aa)) is disordered. Residues 1–1998 (MTVKEKLLKV…CIKYFWHYYG (1998 aa)) lie on the Cytoplasmic side of the membrane. Positions 66-79 (ELSDDGGSDIELLP) are enriched in acidic residues. 4 C2 domains span residues 229–367 (RIDE…YLPT), 954–1082 (DSED…PQWF), 1120–1246 (YKER…KSDH), and 1363–1484 (KKGK…ATGG). Residues 1563-1619 (QKAGKENFSDGSDQQNEDVSDGSWDEEDLEREKEKLKWEKHRSKGKPLKKVTTEKAE) are disordered. The segment covering 1577-1591 (QNEDVSDGSWDEEDL) has biased composition (acidic residues). The span at 1600–1611 (WEKHRSKGKPLK) shows a compositional bias: basic residues. The region spanning 1684 to 1831 (EYGAIPAPFN…EGIGSPSDVG (148 aa)) is the C2 5 domain. The segment at 1953–1972 (QEPAGKKRSEPNHSPFLEKP) is disordered. The helical transmembrane segment at 1999-2019 (LQILLWLIIIVILILTIFVLL) threads the bilayer. At 2020–2034 (HTWPTILAEIIKAIF) the chain is on the extracellular side.

This sequence belongs to the ferlin family. Exclusively expressed in the testis.

The protein localises to the membrane. In terms of biological role, required for the fusion of the membranous organelles (MOs) with the plasma membrane, a process essential in spermiogenesis. This is Sperm vesicle fusion protein fer-1 (fer-1) from Caenorhabditis elegans.